Consider the following 2414-residue polypeptide: Centrosome-associated protein CEP250 (2414 aa).

Coiled-coil stretches lie at residues 91–153 and 248–357; these read EEPN…ELVR and LVAK…VEEE. Disordered stretches follow at residues 356–384, 672–707, 1191–1212, 1269–1303, 2050–2071, 2194–2238, and 2275–2317; these read EEDT…DPQD, AEEA…QETA, SRPE…DPDQ, EAQK…QNSL, AGAR…QERQ, ALEE…KERL, and RERR…GSSD. Polar residues predominate over residues 371–381; sequence QSDCNGLSQFD. Residues 400–1165 are a coiled coil; it reads QQAVQDLRQQ…QLEALVAEQQ (766 aa). A compositionally biased stretch (basic and acidic residues) spans 684-704; sequence RGTREEKEELKDKLSEAHHQQ. Coiled coils occupy residues 1237 to 2200 and 2231 to 2290; these read LQKL…EQQS and GVEE…ASRA. A compositionally biased stretch (low complexity) spans 1280–1289; that stretch reads QDLQRQLSQS. The segment covering 2196–2209 has biased composition (polar residues); sequence EEQQSGGPHSTSRA. Positions 2275–2286 are enriched in basic and acidic residues; it reads RERRKLKRDSVR. Residue serine 2292 is modified to Phosphoserine. Residues 2305–2317 are compositionally biased toward low complexity; the sequence is QQDGRGSQRGSSD. The stretch at 2320 to 2345 forms a coiled coil; sequence LVVELQREVALLRAQLALERKQRQDY. Phosphoserine; by NEK2 occurs at positions 2389 and 2393. The interval 2390–2414 is disordered; that stretch reads LNQSLTSPGPCLLHPSLDTTQNTHR.

In terms of assembly, monomer and homodimer. Forms a complex in vitro with both NEK2 kinase and the PPP1CC catalytic subunit of protein phosphatase 1 (PP1). Interacts with CEP135. Interacts with CROCC/rootletin. Interacts with CNTLN. Interacts with NIN (via C-terminus). Differentially phosphorylated during cell cycle. Phosphorylation may regulate association/dissociation from centrosome. During M phase of mitosis, C-terminal part is phosphorylated by NEK2, suggesting that it may trigger the dissociation from the mitotic centrosome. Dephosphorylated in vitro by the PP1 phosphatase. In terms of tissue distribution, expressed in the retina.

It is found in the cytoplasm. The protein resides in the perinuclear region. Its subcellular location is the cytoskeleton. It localises to the microtubule organizing center. The protein localises to the centrosome. It is found in the centriole. The protein resides in the cilium basal body. Its subcellular location is the cell projection. It localises to the cilium. The protein localises to the photoreceptor outer segment. It is found in the photoreceptor inner segment. Its function is as follows. Plays an important role in centrosome cohesion during interphase. Recruits CCDC102B to the proximal ends of centrioles. Maintains centrosome cohesion by forming intercentriolar linkages. Accumulates at the proximal end of each centriole, forming supramolecular assemblies with viscous material properties that promote organelle cohesion. May be involved in ciliogenesis. In Mus musculus (Mouse), this protein is Centrosome-associated protein CEP250 (Cep250).